A 467-amino-acid chain; its full sequence is Probable apyrase 2 (467 aa).

Residues 1-25 (MRRYSALPGGGARPDTLADRLHRYR) are Cytoplasmic-facing. A helical; Signal-anchor for type II membrane protein membrane pass occupies residues 26 to 46 (GVLLVILAPLALVSLVLLLMP). Over 47–467 (RSPASSSAAA…PLGSAIEVAS (421 aa)) the chain is Extracellular. An ATP-binding site is contributed by 70–80 (VIFDAGSSGSR). Residue Glu192 is the Proton acceptor of the active site. 216 to 226 (GVVDLGGGSVQ) provides a ligand contact to ATP.

It belongs to the GDA1/CD39 NTPase family. Ca(2+) serves as cofactor.

The protein localises to the membrane. The enzyme catalyses a ribonucleoside 5'-triphosphate + 2 H2O = a ribonucleoside 5'-phosphate + 2 phosphate + 2 H(+). In terms of biological role, catalyzes the hydrolysis of phosphoanhydride bonds of nucleoside tri- and di-phosphates. This is Probable apyrase 2 (APY2) from Oryza sativa subsp. japonica (Rice).